Consider the following 144-residue polypeptide: Large ribosomal subunit protein uL15 (144 aa).

The interval 1 to 57 (MKLNDLSPAPGSRREKHRPGRGIGSGLGKTGGRGHKGQTSRSGGSIAPGFEGGQQPL) is disordered. The segment covering 21 to 31 (RGIGSGLGKTG) has biased composition (gly residues).

It belongs to the universal ribosomal protein uL15 family. As to quaternary structure, part of the 50S ribosomal subunit.

Functionally, binds to the 23S rRNA. The sequence is that of Large ribosomal subunit protein uL15 from Pseudomonas entomophila (strain L48).